Reading from the N-terminus, the 495-residue chain is Cobyric acid synthase (495 aa).

The 170-residue stretch at 258–427 folds into the GATase cobBQ-type domain; sequence GLRVAAVRLP…WHGLFDNDGF (170 aa). C339 acts as the Nucleophile in catalysis. H419 is an active-site residue.

Belongs to the CobB/CobQ family. CobQ subfamily.

Its pathway is cofactor biosynthesis; adenosylcobalamin biosynthesis. Catalyzes amidations at positions B, D, E, and G on adenosylcobyrinic A,C-diamide. NH(2) groups are provided by glutamine, and one molecule of ATP is hydrogenolyzed for each amidation. This is Cobyric acid synthase from Mycobacterium sp. (strain KMS).